Consider the following 489-residue polypeptide: Argininosuccinate lyase (489 aa).

The interval glutamine 462–serine 489 is disordered.

It belongs to the lyase 1 family. Argininosuccinate lyase subfamily.

It is found in the cytoplasm. It carries out the reaction 2-(N(omega)-L-arginino)succinate = fumarate + L-arginine. The protein operates within amino-acid biosynthesis; L-arginine biosynthesis; L-arginine from L-ornithine and carbamoyl phosphate: step 3/3. The polypeptide is Argininosuccinate lyase (Synechococcus sp. (strain JA-3-3Ab) (Cyanobacteria bacterium Yellowstone A-Prime)).